The following is a 393-amino-acid chain: NAD(P)H-quinone oxidoreductase subunit H, chloroplastic (393 aa).

Belongs to the complex I 49 kDa subunit family. In terms of assembly, NDH is composed of at least 16 different subunits, 5 of which are encoded in the nucleus.

The protein resides in the plastid. It localises to the chloroplast thylakoid membrane. It catalyses the reaction a plastoquinone + NADH + (n+1) H(+)(in) = a plastoquinol + NAD(+) + n H(+)(out). It carries out the reaction a plastoquinone + NADPH + (n+1) H(+)(in) = a plastoquinol + NADP(+) + n H(+)(out). In terms of biological role, NDH shuttles electrons from NAD(P)H:plastoquinone, via FMN and iron-sulfur (Fe-S) centers, to quinones in the photosynthetic chain and possibly in a chloroplast respiratory chain. The immediate electron acceptor for the enzyme in this species is believed to be plastoquinone. Couples the redox reaction to proton translocation, and thus conserves the redox energy in a proton gradient. The polypeptide is NAD(P)H-quinone oxidoreductase subunit H, chloroplastic (Agrostis stolonifera (Creeping bentgrass)).